A 432-amino-acid polypeptide reads, in one-letter code: MSSKNDQLFARAQLSTPGGVNSPVRAFRSVGGTPRFITKAEGPYFWDADDRRYIDYIGSWGPAIVGHAHPDVVKAVQDAATRGLSFGAPTEAEIEMAELICRLVPSIEQVRLVSSGTEAAMSALRLARGATGRDKIIKFEGCYHGHADSLLVKAGSGLLTFGNPTSAGVPEDFAKHTLVLDYNDPAQLENVFKEMGDSIACVIVEPVAGNMNLLPATPEFLQTMRRVCTQYGAVMILDEVMSGFRVALGGAQSLYGITPDLTVLGKVIGGGLPVAAFGGRADIMRHLAPLGGVYQAGTLSGNPVTVAAGMATLKLIQAPGFYENLTAQTTKLVHGFSAAAREADIAFCANSVGGMFGLYFASEVPVSYDTMMKCDKTRFNAFFHAMLDAGVYLAPSAFEAGFVSAQHDDAVIDSSIKAARAAFAQLADDCDD.

K266 carries the post-translational modification N6-(pyridoxal phosphate)lysine.

Belongs to the class-III pyridoxal-phosphate-dependent aminotransferase family. HemL subfamily. In terms of assembly, homodimer. Requires pyridoxal 5'-phosphate as cofactor.

It is found in the cytoplasm. It catalyses the reaction (S)-4-amino-5-oxopentanoate = 5-aminolevulinate. Its pathway is porphyrin-containing compound metabolism; protoporphyrin-IX biosynthesis; 5-aminolevulinate from L-glutamyl-tRNA(Glu): step 2/2. In Janthinobacterium sp. (strain Marseille) (Minibacterium massiliensis), this protein is Glutamate-1-semialdehyde 2,1-aminomutase.